The sequence spans 702 residues: MIHTLETTVAGRKMKVDFGKTGMLSNAAIFMSYGDTVVMINANASKAPREGIDFFPLSVDYEERLYSVGKIPGGFIKREGKPSDKSILHARSIDRPLRPLFPKGYRNDVQIVNTVLSVEQDNLPEILAINGSSLALCLSSIPFTTPVAAVSVGLVDGEFIINPTVAQRENTILDLTVCATKERVMMVEAGGQEIDEETMYSAIMFGFQECKNIVAFQEEAVAKFGKTKNEPILYKADEEVEKEVKEFAFDMIKEVMYIMDKDERNAQLDKVKEKISEEFSEKYEDKKADIAEVIYKTQKEVVRNMLLNENRRPDGRSFDEVRPISCEVGILPRTHGTGLFTRGLTQVMTVATLGALGDVQILDGIAEEASKRYMHHYNFPSYSVGEVRPLRGPGRREIGHGALAERALEPLIPSEEEFPYTIRLVSEVLSSNGSTSQASVCGSTLALLDAGVPIKRPAAGIAMGLITSDDLEKEKVITDIQGIEDFFGDMDFKVAGTEKGITSIQFDTKIAGLSDNCVRDALEGAKKARLHILGKIKECIPEPRKELSKYAPRTEIICIDPEKIRDVIGAGGKIINKIIADTNVKIEIKEDGKIFVTSNNEPEGVKKAISIIEGLTKEVVQGEIYLGKVTKTTNFGAFVEILPGKEGLVHISKLDFARVEKVEDVVSVGDEILVKVTDIDNQGRINLSRKDAIAKKEEEKDK.

D485 and D491 together coordinate Mg(2+). Positions 552-612 constitute a KH domain; that stretch reads PRTEIICIDP…EGVKKAISII (61 aa). The S1 motif domain maps to 622–690; it reads GEIYLGKVTK…NQGRINLSRK (69 aa).

This sequence belongs to the polyribonucleotide nucleotidyltransferase family. It depends on Mg(2+) as a cofactor.

Its subcellular location is the cytoplasm. The enzyme catalyses RNA(n+1) + phosphate = RNA(n) + a ribonucleoside 5'-diphosphate. In terms of biological role, involved in mRNA degradation. Catalyzes the phosphorolysis of single-stranded polyribonucleotides processively in the 3'- to 5'-direction. In Clostridium botulinum (strain Kyoto / Type A2), this protein is Polyribonucleotide nucleotidyltransferase.